The sequence spans 416 residues: Gamma-glutamyl phosphate reductase (416 aa).

Belongs to the gamma-glutamyl phosphate reductase family.

It localises to the cytoplasm. The catalysed reaction is L-glutamate 5-semialdehyde + phosphate + NADP(+) = L-glutamyl 5-phosphate + NADPH + H(+). It functions in the pathway amino-acid biosynthesis; L-proline biosynthesis; L-glutamate 5-semialdehyde from L-glutamate: step 2/2. Catalyzes the NADPH-dependent reduction of L-glutamate 5-phosphate into L-glutamate 5-semialdehyde and phosphate. The product spontaneously undergoes cyclization to form 1-pyrroline-5-carboxylate. The polypeptide is Gamma-glutamyl phosphate reductase (Vibrio atlanticus (strain LGP32) (Vibrio splendidus (strain Mel32))).